The following is a 273-amino-acid chain: ABC transporter glutamine-binding protein GlnH (273 aa).

Residues 1–20 form the signal peptide; sequence MKKIFSLALISLFAVILLAA. The N-palmitoyl cysteine moiety is linked to residue Cys21. Cys21 carries the S-diacylglycerol cysteine lipid modification.

This sequence belongs to the bacterial solute-binding protein 3 family. In terms of assembly, the complex is composed of two ATP-binding proteins (GlnQ), two transmembrane proteins (GlnM and GlnP) and a solute-binding protein (GlnH).

It localises to the cell membrane. In terms of biological role, part of the ABC transporter complex GlnHMPQ involved in glutamine transport. This chain is ABC transporter glutamine-binding protein GlnH (glnH), found in Bacillus subtilis (strain 168).